The sequence spans 323 residues: Ribose 1,5-bisphosphate isomerase (323 aa).

Substrate contacts are provided by residues 22 to 25 (RGAA) and arginine 65. The Proton acceptor role is filled by cysteine 130. Aspartate 199 functions as the Proton donor in the catalytic mechanism. Substrate-binding positions include 209-210 (NK) and lysine 235. Residue lysine 210 forms a Glycyl lysine isopeptide (Lys-Gly) (interchain with G-Cter in SAMP2) linkage.

It belongs to the eIF-2B alpha/beta/delta subunits family. R15P isomerase subfamily.

It carries out the reaction alpha-D-ribose 1,5-bisphosphate = D-ribulose 1,5-bisphosphate. In terms of biological role, catalyzes the isomerization of ribose 1,5-bisphosphate (R15P) to ribulose 1,5-bisphosphate (RuBP), the CO(2) acceptor and substrate for RubisCO. Functions in an archaeal AMP degradation pathway, together with AMP phosphorylase and RubisCO. This is Ribose 1,5-bisphosphate isomerase from Haloferax volcanii (strain ATCC 29605 / DSM 3757 / JCM 8879 / NBRC 14742 / NCIMB 2012 / VKM B-1768 / DS2) (Halobacterium volcanii).